The sequence spans 251 residues: Cyclohexanol dehydrogenase (251 aa).

Positions 42, 95, 161, 165, 194, and 196 each coordinate NAD(+). Tyr-161 functions as the Proton acceptor in the catalytic mechanism.

This sequence belongs to the short-chain dehydrogenases/reductases (SDR) family.

The catalysed reaction is cyclohexanol + NAD(+) = cyclohexanone + NADH + H(+). Catalyzes the oxidation of cyclohexanol to cyclohexanone. Required for the conversion of cyclohexanol to adipic acid. The protein is Cyclohexanol dehydrogenase of Acinetobacter sp. (strain SE19).